A 344-amino-acid chain; its full sequence is Leucine-rich repeat-containing protein 75A (344 aa).

Residues 1-25 (MGTRQTKGSLAERASPGAAPGPRRE) are disordered. Residues 11 to 21 (AERASPGAAPG) are compositionally biased toward low complexity. 2 LRR repeats span residues 204–217 (VDSV…LTDD) and 229–242 (LPRL…GNRL). A disordered region spans residues 295 to 344 (LPTILELGEGPGSGEEVREGTVGQEDPGGGPVAPAEDHHEGKETVAAAQT).

Belongs to the LRRC75 family.

The chain is Leucine-rich repeat-containing protein 75A (LRRC75A) from Homo sapiens (Human).